A 395-amino-acid chain; its full sequence is Cyclin-A2 (395 aa).

Residues 1–93 (MLAEQENQEN…EEAADAPGLR (93 aa)) form a disordered region. The segment covering 27–60 (ALGLLRGGPARPGPAAQAARNGEGRGAAAGQQQQ) has biased composition (low complexity).

It belongs to the cyclin family. Cyclin AB subfamily. In terms of assembly, interacts with the CDK1 and CDK2 protein kinases to form serine/threonine kinase holoenzyme complexes.

It localises to the nucleus. The protein localises to the cytoplasm. Its function is as follows. Cyclin which controls both the G1/S and the G2/M transition phases of the cell cycle. Functions through the formation of specific serine/threonine kinase holoenzyme complexes with the cyclin-dependent protein kinases CDK1 and CDK2. The cyclin subunit confers the substrate specificity of these complexes and differentially interacts with and activates CDK1 and CDK2 throughout the cell cycle. This chain is Cyclin-A2, found in Gallus gallus (Chicken).